We begin with the raw amino-acid sequence, 683 residues long: Glucosylceramidase (683 aa).

Residue Glu-254 is the Proton donor of the active site. The active-site Nucleophile is the Glu-483.

Belongs to the glycosyl hydrolase 5 (cellulase A) family.

The protein resides in the membrane. The catalysed reaction is a beta-D-glucosyl-(1&lt;-&gt;1')-N-acylsphing-4-enine + H2O = an N-acylsphing-4-enine + D-glucose. Inhibited by metal cations Co(2+), Cu(2+), Ni(2+), Pb(2+) and Zn(2+). Not inhibited by metal chelator ethylenediaminetetraacetic acid (EDTA). Functionally, specifically hydrolyzes the glucosidic linkage in glucosylceramide. May prevent accumulation of aberrent glucosylceramide containing immature ceramide. The sequence is that of Glucosylceramidase from Rhizopus delemar (strain RA 99-880 / ATCC MYA-4621 / FGSC 9543 / NRRL 43880) (Mucormycosis agent).